Reading from the N-terminus, the 75-residue chain is Small ribosomal subunit protein bS18 (75 aa).

It belongs to the bacterial ribosomal protein bS18 family. As to quaternary structure, part of the 30S ribosomal subunit. Forms a tight heterodimer with protein bS6.

Its function is as follows. Binds as a heterodimer with protein bS6 to the central domain of the 16S rRNA, where it helps stabilize the platform of the 30S subunit. This Mycoplasma mycoides subsp. mycoides SC (strain CCUG 32753 / NCTC 10114 / PG1) protein is Small ribosomal subunit protein bS18.